The sequence spans 359 residues: Guanine nucleotide-binding protein subunit alpha-11 (359 aa).

Residues Cys9 and Cys10 are each lipidated (S-palmitoyl cysteine). In terms of domain architecture, G-alpha spans 38–359 (RELKLLLLGT…QLNLKEYNLV (322 aa)). Residues 41-54 (KLLLLGTGESGKST) are G1 motif. Residues 46–53 (GTGESGKS) and 180–183 (LRVR) contribute to the GTP site. Mg(2+) is bound at residue Ser53. The interval 178 to 186 (DVLRVRVPT) is G2 motif. Thr186 is a Mg(2+) binding site. Residues 201 to 210 (FRMVDVGGQR) form a G3 motif region. The tract at residues 270 to 277 (ILFLNKKD) is G4 motif. GTP contacts are provided by residues 274–277 (NKKD) and Ala331. A G5 motif region spans residues 329–334 (TCATDT).

It belongs to the G-alpha family. G(q) subfamily. G proteins are composed of 3 units; alpha, beta and gamma. The alpha chain contains the guanine nucleotide binding site. Interacts with RGS22. Interacts with NTSR1.

The protein localises to the cell membrane. Its subcellular location is the cytoplasm. The enzyme catalyses GTP + H2O = GDP + phosphate + H(+). In terms of biological role, guanine nucleotide-binding proteins (G proteins) function as transducers downstream of G protein-coupled receptors (GPCRs) in numerous signaling cascades. The alpha chain contains the guanine nucleotide binding site and alternates between an active, GTP-bound state and an inactive, GDP-bound state. Signaling by an activated GPCR promotes GDP release and GTP binding. The alpha subunit has a low GTPase activity that converts bound GTP to GDP, thereby terminating the signal. Both GDP release and GTP hydrolysis are modulated by numerous regulatory proteins. Signaling is mediated via phospholipase C-beta-dependent inositol lipid hydrolysis for signal propagation: activates phospholipase C-beta: following GPCR activation, GNA11 activates PLC-beta (PLCB1, PLCB2, PLCB3 or PLCB4), leading to production of diacylglycerol (DAG) and inositol 1,4,5-trisphosphate (IP3). Transduces FFAR4 signaling in response to long-chain fatty acids (LCFAs). Together with GNAQ, required for heart development. In the respiratory epithelium, transmits OXGR1-dependent signals that lead to downstream intracellular Ca(2+) release and mucocilliary clearance of airborne pathogens. The sequence is that of Guanine nucleotide-binding protein subunit alpha-11 (GNA11) from Bos taurus (Bovine).